Consider the following 617-residue polypeptide: Proline--tRNA ligase (617 aa).

It belongs to the class-II aminoacyl-tRNA synthetase family. ProS type 1 subfamily. In terms of assembly, homodimer.

It localises to the cytoplasm. The catalysed reaction is tRNA(Pro) + L-proline + ATP = L-prolyl-tRNA(Pro) + AMP + diphosphate. Its function is as follows. Catalyzes the attachment of proline to tRNA(Pro) in a two-step reaction: proline is first activated by ATP to form Pro-AMP and then transferred to the acceptor end of tRNA(Pro). As ProRS can inadvertently accommodate and process non-cognate amino acids such as alanine and cysteine, to avoid such errors it has two additional distinct editing activities against alanine. One activity is designated as 'pretransfer' editing and involves the tRNA(Pro)-independent hydrolysis of activated Ala-AMP. The other activity is designated 'posttransfer' editing and involves deacylation of mischarged Ala-tRNA(Pro). The misacylated Cys-tRNA(Pro) is not edited by ProRS. This chain is Proline--tRNA ligase, found in Streptococcus pneumoniae (strain ATCC 700669 / Spain 23F-1).